We begin with the raw amino-acid sequence, 103 residues long: Cell division protein FtsB (103 aa).

At 1–3 the chain is on the cytoplasmic side; the sequence is MGK. Residues 4 to 21 traverse the membrane as a helical segment; it reads LTLLLLAILVWLQYSLWF. Residues 22 to 103 are Periplasmic-facing; sequence GKNGIHDYTR…RAQSAGQNNR (82 aa). Residues 31-71 are a coiled coil; that stretch reads RVNDDVAAQQATNAKLKARNDQLFAEIDDLNGGQEALEERA.

Belongs to the FtsB family. Part of a complex composed of FtsB, FtsL and FtsQ.

It is found in the cell inner membrane. Its function is as follows. Essential cell division protein. May link together the upstream cell division proteins, which are predominantly cytoplasmic, with the downstream cell division proteins, which are predominantly periplasmic. The sequence is that of Cell division protein FtsB from Escherichia coli O157:H7.